The chain runs to 131 residues: Small ribosomal subunit protein uS8 (131 aa).

It belongs to the universal ribosomal protein uS8 family. Part of the 30S ribosomal subunit. Contacts proteins S5 and S12.

Functionally, one of the primary rRNA binding proteins, it binds directly to 16S rRNA central domain where it helps coordinate assembly of the platform of the 30S subunit. The protein is Small ribosomal subunit protein uS8 of Bordetella petrii (strain ATCC BAA-461 / DSM 12804 / CCUG 43448).